The following is a 525-amino-acid chain: MYTQADEYDGGDAGYEDDYSGYQGDGDDSVGSYNVPEEIKRFIHFFHQHVLEQNLYEIQSIYENGFNKLTDRYFNKTPWPEAEFIAPLVSGDQVFLILYKELYYRHIYNKLKPTVEQRFESYYNYCDLFNYILNTDEPVPLTLPNQWLWDIIDEFIYQFQAFSQFRSKLQNKPEDEIDVLRANSKIWNIHSVLNVLYSLVEKSRINYQLEMYNTNGNPDEVSGEFGIHPLYKMLGYFSLIGLLRLHSLLGDYFQAIKVLSNVELTRNTMYSRIPACQITTYYYVGFAYLMMRRYQDAIRCFSSVLLYIQRTKNMLQTKSYQYEEIMKKNDQMYNLLAIALTLCPQQLDENVHSQLREKCTEKMQKLQKGDLQMFEECFSYSCPKFVSPVPPNFDAPPANYNREPFNLQLKVFMNEVAQQSMIPVIRSYLKLYTTMPIAKLAAFLDMDEATFRNQLLCYKHKQRNLVWTKGTDGLDGEQQSSSEVDFYIDRDMIHIADTKVDRRYGEFFMRQIYKFDEMARNLQAL.

Acidic residues predominate over residues Met1–Tyr19. The disordered stretch occupies residues Met1 to Gly21. The PCI domain maps to Asp296–Arg502.

It belongs to the eIF-3 subunit L family. Component of the eukaryotic translation initiation factor 3 (eIF-3) complex.

The protein localises to the cytoplasm. In terms of biological role, component of the eukaryotic translation initiation factor 3 (eIF-3) complex, which is involved in protein synthesis of a specialized repertoire of mRNAs and, together with other initiation factors, stimulates binding of mRNA and methionyl-tRNAi to the 40S ribosome. The eIF-3 complex specifically targets and initiates translation of a subset of mRNAs involved in cell proliferation. The chain is Eukaryotic translation initiation factor 3 subunit L from Nematostella vectensis (Starlet sea anemone).